Here is a 492-residue protein sequence, read N- to C-terminus: 2,3-bisphosphoglycerate-independent phosphoglycerate mutase (492 aa).

Mn(2+)-binding residues include Asp11 and Ser61. The active-site Phosphoserine intermediate is Ser61. Substrate is bound by residues His118, 147-148 (RD), Arg178, Arg184, 248-251 (RNDR), and Lys320. Residues Asp386, His390, Asp427, His428, and His445 each contribute to the Mn(2+) site.

This sequence belongs to the BPG-independent phosphoglycerate mutase family. Monomer. It depends on Mn(2+) as a cofactor.

It catalyses the reaction (2R)-2-phosphoglycerate = (2R)-3-phosphoglycerate. Its pathway is carbohydrate degradation; glycolysis; pyruvate from D-glyceraldehyde 3-phosphate: step 3/5. In terms of biological role, catalyzes the interconversion of 2-phosphoglycerate and 3-phosphoglycerate. The polypeptide is 2,3-bisphosphoglycerate-independent phosphoglycerate mutase (Campylobacter jejuni subsp. jejuni serotype O:6 (strain 81116 / NCTC 11828)).